Reading from the N-terminus, the 72-residue chain is MENGEILLTSWLNRSVHIEIFDERKFIGKFLCTDREGAAILSNTTEYNKGFSRALGLVVIPGKHIKSFSVRA.

In terms of domain architecture, Sm spans 3-72 (NGEILLTSWL…KHIKSFSVRA (70 aa)).

Component of the N-terminal acetyltransferase C (NatC) complex, composed of the catalytic subunit Naa30, a large auxiliary subunit Naa35 and a small auxiliary subunit Naa38.

It is found in the endoplasmic reticulum. Its function is as follows. Component of the NatC N-terminal acetyltransferase, which associates with the ribosome to acetylate nascent protein chains in a cotranslational manner. NatC acetylates protein N-termini starting with methionine, followed by a hydrophobic or amphipathic amino acid, with amino acids at positions 3 and 4 also contributing to NatC recognition. The first 4 amino acids of cognate substrates are recognized at the Naa30-Naa35 interface. NatC-dependent acetylation targets various substrate proteins to specific subcellular sites. This is N-alpha-acetyltransferase 38, NatC auxiliary subunit (naa38) from Schizosaccharomyces pombe (strain 972 / ATCC 24843) (Fission yeast).